The following is a 162-amino-acid chain: Phycoerythrocyanin alpha chain (162 aa).

C84 serves as a coordination point for (15Z)-phycoviolobilin.

It belongs to the phycobiliprotein family. Heterodimer of an alpha and a beta chain. In terms of processing, contains one covalently linked bilin chromophore.

It is found in the cellular thylakoid membrane. Light-harvesting photosynthetic bile pigment-protein from the phycobiliprotein complex. In Nostoc sp. (strain PCC 7120 / SAG 25.82 / UTEX 2576), this protein is Phycoerythrocyanin alpha chain (pecA).